Consider the following 586-residue polypeptide: Arginine--tRNA ligase (586 aa).

The 'HIGH' region motif lies at 131–141 (ANPTGPMHVGH).

It belongs to the class-I aminoacyl-tRNA synthetase family. Monomer.

It localises to the cytoplasm. It catalyses the reaction tRNA(Arg) + L-arginine + ATP = L-arginyl-tRNA(Arg) + AMP + diphosphate. In Azorhizobium caulinodans (strain ATCC 43989 / DSM 5975 / JCM 20966 / LMG 6465 / NBRC 14845 / NCIMB 13405 / ORS 571), this protein is Arginine--tRNA ligase.